A 257-amino-acid polypeptide reads, in one-letter code: MLPSELVKYKKNSQKIIALTAWDSISGSLAEQSGADIVLVGDSLAMVCLGYKSTLPVTLENMIYHTNAVSRGFSREIEEHSLLVCDMPFLTYQCGEDKAVEYAGKIIKNTYAKAVKIEGAEPEVQTVISRLIRMGIPVMGHLGLTPQSYLNLGLKKQGLKKESYEKIKRDALSLEKLGCFSIVLEHIPELLAKEIQTDLEIPTIGIGAGVFCDGQVRVTADLLGLSDKQPPFCKPIVDGKKYFGEKLKEWVTSERLS.

The Mg(2+) site is built by Asp42 and Asp86. 3-methyl-2-oxobutanoate contacts are provided by residues Asp42–Ser43, Asp86, and Lys116. Position 118 (Glu118) interacts with Mg(2+). Catalysis depends on Glu185, which acts as the Proton acceptor.

This sequence belongs to the PanB family. As to quaternary structure, homodecamer; pentamer of dimers. The cofactor is Mg(2+).

The protein localises to the cytoplasm. The enzyme catalyses 3-methyl-2-oxobutanoate + (6R)-5,10-methylene-5,6,7,8-tetrahydrofolate + H2O = 2-dehydropantoate + (6S)-5,6,7,8-tetrahydrofolate. The protein operates within cofactor biosynthesis; (R)-pantothenate biosynthesis; (R)-pantoate from 3-methyl-2-oxobutanoate: step 1/2. Its function is as follows. Catalyzes the reversible reaction in which hydroxymethyl group from 5,10-methylenetetrahydrofolate is transferred onto alpha-ketoisovalerate to form ketopantoate. The sequence is that of 3-methyl-2-oxobutanoate hydroxymethyltransferase from Prochlorococcus marinus (strain MIT 9515).